The sequence spans 821 residues: Leucine--tRNA ligase (821 aa).

The 'HIGH' region signature appears at 44 to 54 (PYPSGRIHMGH). The short motif at 589–593 (KMSKS) is the 'KMSKS' region element. Lys592 is an ATP binding site.

This sequence belongs to the class-I aminoacyl-tRNA synthetase family.

The protein localises to the cytoplasm. The enzyme catalyses tRNA(Leu) + L-leucine + ATP = L-leucyl-tRNA(Leu) + AMP + diphosphate. This chain is Leucine--tRNA ligase, found in Campylobacter curvus (strain 525.92).